A 164-amino-acid chain; its full sequence is Transcription antitermination protein NusB (164 aa).

The protein belongs to the NusB family.

Involved in transcription antitermination. Required for transcription of ribosomal RNA (rRNA) genes. Binds specifically to the boxA antiterminator sequence of the ribosomal RNA (rrn) operons. The protein is Transcription antitermination protein NusB of Chlorobium limicola (strain DSM 245 / NBRC 103803 / 6330).